The chain runs to 466 residues: Ribulose bisphosphate carboxylase large chain (466 aa).

Residue Lys5 is modified to N6,N6,N6-trimethyllysine. The substrate site is built by Asn114 and Thr164. Catalysis depends on Lys166, which acts as the Proton acceptor. Residue Lys168 coordinates substrate. Residues Lys192, Asp194, and Glu195 each coordinate Mg(2+). Lys192 bears the N6-carboxylysine mark. His285 serves as the catalytic Proton acceptor. The substrate site is built by Arg286, His318, and Ser370.

It belongs to the RuBisCO large chain family. Type I subfamily. In terms of assembly, heterohexadecamer of 8 large chains and 8 small chains; disulfide-linked. The disulfide link is formed within the large subunit homodimers. Requires Mg(2+) as cofactor. The disulfide bond which can form in the large chain dimeric partners within the hexadecamer appears to be associated with oxidative stress and protein turnover.

It is found in the plastid. The protein resides in the chloroplast. It carries out the reaction 2 (2R)-3-phosphoglycerate + 2 H(+) = D-ribulose 1,5-bisphosphate + CO2 + H2O. The enzyme catalyses D-ribulose 1,5-bisphosphate + O2 = 2-phosphoglycolate + (2R)-3-phosphoglycerate + 2 H(+). In terms of biological role, ruBisCO catalyzes two reactions: the carboxylation of D-ribulose 1,5-bisphosphate, the primary event in carbon dioxide fixation, as well as the oxidative fragmentation of the pentose substrate in the photorespiration process. Both reactions occur simultaneously and in competition at the same active site. This Poliothyrsis sinensis (Chinese pearlbloom tree) protein is Ribulose bisphosphate carboxylase large chain.